The sequence spans 353 residues: Photosystem II protein D1 (353 aa).

Residue threonine 2 is modified to N-acetylthreonine. Position 2 is a phosphothreonine (threonine 2). 3 helical membrane passes run 29-46, 118-133, and 142-156; these read YIGWFGVLMIPTLLTATS, HFLLGVACYMGREWEL, and WIAVAYSAPVAAATA. Histidine 118 lines the chlorophyll a pocket. Tyrosine 126 lines the pheophytin a pocket. [CaMn4O5] cluster-binding residues include aspartate 170 and glutamate 189. The helical transmembrane segment at 197–218 threads the bilayer; sequence FHMLGVAGVFGGSLFSAMHGSL. Histidine 198 lines the chlorophyll a pocket. A quinone-binding positions include histidine 215 and 264–265; that span reads SF. Residue histidine 215 coordinates Fe cation. Position 272 (histidine 272) interacts with Fe cation. A helical transmembrane segment spans residues 274–288; sequence FLAAWPVVGIWFTAL. Histidine 332, glutamate 333, aspartate 342, and alanine 344 together coordinate [CaMn4O5] cluster. A propeptide spanning residues 345-353 is cleaved from the precursor; that stretch reads AIEAPATNG.

This sequence belongs to the reaction center PufL/M/PsbA/D family. PSII is composed of 1 copy each of membrane proteins PsbA, PsbB, PsbC, PsbD, PsbE, PsbF, PsbH, PsbI, PsbJ, PsbK, PsbL, PsbM, PsbT, PsbX, PsbY, PsbZ, Psb30/Ycf12, at least 3 peripheral proteins of the oxygen-evolving complex and a large number of cofactors. It forms dimeric complexes. It depends on The D1/D2 heterodimer binds P680, chlorophylls that are the primary electron donor of PSII, and subsequent electron acceptors. It shares a non-heme iron and each subunit binds pheophytin, quinone, additional chlorophylls, carotenoids and lipids. D1 provides most of the ligands for the Mn4-Ca-O5 cluster of the oxygen-evolving complex (OEC). There is also a Cl(-1) ion associated with D1 and D2, which is required for oxygen evolution. The PSII complex binds additional chlorophylls, carotenoids and specific lipids. as a cofactor. Tyr-161 forms a radical intermediate that is referred to as redox-active TyrZ, YZ or Y-Z. In terms of processing, C-terminally processed by CTPA; processing is essential to allow assembly of the oxygen-evolving complex and thus photosynthetic growth.

It localises to the plastid membrane. The enzyme catalyses 2 a plastoquinone + 4 hnu + 2 H2O = 2 a plastoquinol + O2. Functionally, photosystem II (PSII) is a light-driven water:plastoquinone oxidoreductase that uses light energy to abstract electrons from H(2)O, generating O(2) and a proton gradient subsequently used for ATP formation. It consists of a core antenna complex that captures photons, and an electron transfer chain that converts photonic excitation into a charge separation. The D1/D2 (PsbA/PsbD) reaction center heterodimer binds P680, the primary electron donor of PSII as well as several subsequent electron acceptors. In Cuscuta reflexa (Southern Asian dodder), this protein is Photosystem II protein D1.